The sequence spans 1020 residues: Protein translocase subunit SecA (1020 aa).

Residues Q99, 117–121 (GEGKT), and D633 each bind ATP. Residues 963-992 (NEQPSQEMAADEETQEESKIEENKPEPIVV) form a disordered region. Positions 978–987 (EESKIEENKP) are enriched in basic and acidic residues. Positions 1002, 1004, 1013, and 1014 each coordinate Zn(2+).

It belongs to the SecA family. Monomer and homodimer. Part of the essential Sec protein translocation apparatus which comprises SecA, SecYEG and auxiliary proteins SecDF. Other proteins may also be involved. It depends on Zn(2+) as a cofactor.

Its subcellular location is the cell inner membrane. The protein localises to the cytoplasm. It carries out the reaction ATP + H2O + cellular proteinSide 1 = ADP + phosphate + cellular proteinSide 2.. Its function is as follows. Part of the Sec protein translocase complex. Interacts with the SecYEG preprotein conducting channel. Has a central role in coupling the hydrolysis of ATP to the transfer of proteins into and across the cell membrane, serving as an ATP-driven molecular motor driving the stepwise translocation of polypeptide chains across the membrane. This chain is Protein translocase subunit SecA, found in Protochlamydia amoebophila (strain UWE25).